The following is a 295-amino-acid chain: Host-inducible protein A (295 aa).

The disordered stretch occupies residues 1 to 20; that stretch reads MHLDRSDSNGGSSRYTLDHE.

The protein belongs to the NopP family.

This Rhizobium fredii (Sinorhizobium fredii) protein is Host-inducible protein A.